A 1033-amino-acid polypeptide reads, in one-letter code: SIT4-associating protein SAP190 (1033 aa).

Disordered regions lie at residues 32 to 82 (DQDD…TTES), 147 to 213 (PEII…QVET), and 768 to 1033 (FGND…KEAF). Residues 158-170 (ILIERDRKDKKED) are compositionally biased toward basic and acidic residues. The span at 171–182 (AEEGGDSEETTN) shows a compositional bias: acidic residues. Residues 183–195 (DSDHDSGDERSVD) show a composition bias toward basic and acidic residues. Ser-774 bears the Phosphoserine mark. Acidic residues-rich tracts occupy residues 784-793 (SEDIIGDTEG) and 825-838 (ENEE…EYSD). Phosphoserine is present on residues Ser-857, Ser-862, and Ser-892. The span at 858–879 (DDGKSKSAESEFTDKISEHRDG) shows a compositional bias: basic and acidic residues. Residues 909–924 (SRSQPSDPKLQDQNIF) show a composition bias toward polar residues. The span at 932 to 944 (GVGDDDDYMDPND) shows a compositional bias: acidic residues. Phosphothreonine is present on Thr-990. Ser-991 carries the phosphoserine modification. The segment covering 1000 to 1018 (ISSDEEDSEDEDEENDMGN) has biased composition (acidic residues).

It belongs to the SAPS family. Associates with the SIT4 protein phosphatase catalytic subunit in a cell-cycle-dependent manner. In terms of processing, hyperphosphorylated in the absence of SIT4.

Its subcellular location is the cytoplasm. In terms of biological role, positive regulator of protein phosphatase SIT4. Involved in the general amino acid control (GAAC) response regulated by TOR. Involved in the dephosphorylation of the elongator complex subunit IKI3. The polypeptide is SIT4-associating protein SAP190 (SAP190) (Saccharomyces cerevisiae (strain ATCC 204508 / S288c) (Baker's yeast)).